The sequence spans 359 residues: MVLELVAMELKVWVDGIQRVVCGVSEQTTCQEVVIALAQAIGQTGRFVLVQRLREKERQLLPQECPVGAQATCGQFANDVQFVLRRTGPSLSGRPSSDNCPPPERCPVRASLPPKPSAIPGREPRKALTFNLRCPKLVPSPSIPEPAALVGPIPDGFADLQDLELRIQRNTEELGHEAFWEQELQREQAREREGQARLQALSAATAEHAARLEALDAQACALEAELRLAAEAPGPPSATASAAERLRQDLATQERHSLEMQGTLALVSQALEAAEHALQAQAQELEELNRELRQCNLQQFIQQTGAALPPPPPQLDRTIPSTQDLLSPNRGELQGVPQSHILVSSLSPEVPPMRQSSWR.

In terms of domain architecture, Ras-associating spans 6–89 (VAMELKVWVD…VQFVLRRTGP (84 aa)). The tract at residues 87–123 (TGPSLSGRPSSDNCPPPERCPVRASLPPKPSAIPGRE) is disordered. Over residues 89–99 (PSLSGRPSSDN) the composition is skewed to polar residues. Coiled coils occupy residues 180-208 (WEQE…TAEH) and 242-301 (AAER…QQFI). A disordered region spans residues 339–359 (SHILVSSLSPEVPPMRQSSWR).

Interacts with MAP2K7 and GTP-bound NRAS. Polyubiquitinated and degraded by the proteasome upon prolonged stress stimuli.

Its subcellular location is the cytoplasm. It is found in the cytoskeleton. The protein resides in the microtubule organizing center. The protein localises to the centrosome. Negatively regulates stress-induced JNK activation and apoptosis by promoting MAP2K7 phosphorylation and inhibiting its ability to activate JNK. Following prolonged stress, anti-apoptotic effect stops because of degradation of RASSF7 protein via the ubiquitin-proteasome pathway. Required for the activation of AURKB and chromosomal congression during mitosis where it stimulates microtubule polymerization. The protein is Ras association domain-containing protein 7 (Rassf7) of Mus musculus (Mouse).